Consider the following 858-residue polypeptide: Neural cell adhesion molecule 1 (858 aa).

Residues 1 to 19 form the signal peptide; sequence MLRTKDLIWTLFFLGTAVS. 5 consecutive Ig-like C2-type domains span residues 20 to 111, 116 to 205, 212 to 302, 309 to 414, and 417 to 502; these read LQVD…ATVN, QKLM…KDIQ, PTVQ…ASIH, PKIT…LEVQ, and PKLQ…ESLE. Over 20-721 the chain is Extracellular; sequence LQVDIVPSQG…NGSPTAGLST (702 aa). Disulfide bonds link Cys-41–Cys-96 and Cys-139–Cys-189. Heparin-binding positions include 152-156 and 161-165; these read KHKGR and KKDVR. A glycan (N-linked (GlcNAc...) asparagine) is linked at Asn-222. An intrachain disulfide couples Cys-235 to Cys-288. N-linked (GlcNAc...) asparagine glycosylation is found at Asn-316, Asn-348, Asn-434, Asn-460, and Asn-489. Cys-330 and Cys-396 are disulfide-bonded. Cys-437 and Cys-490 are disulfide-bonded. Fibronectin type-III domains follow at residues 510 to 609 and 611 to 706; these read TPSS…TQPV and EPSA…SAQP. Residues 722 to 739 form a helical membrane-spanning segment; that stretch reads GAIVGILIVIFVLLLVVM. Residues 740–858 are Cytoplasmic-facing; it reads DITCYFLNKC…TQTKENESKA (119 aa). Residues 765-858 are disordered; it reads PGAKGKDMEE…TQTKENESKA (94 aa). Composition is skewed to basic and acidic residues over residues 768 to 809 and 817 to 834; these read KGKD…HTEP and EPEK…ESEA. Residues Ser-780 and Ser-784 each carry the phosphoserine modification.

As to quaternary structure, interacts with MDK. Found in a complex with SLC39A6, SLC39A10 and with NCAM1; this complex controls NCAM1 phosphorylation and integration into focal adhesion complexes during epithelial-tomesenchymal transition. Interacts with synaptic plasticity regulator PANTS. In terms of processing, polysialylated by ST8SIA2 and ST8SIA4. Polysialylation modulates cell interactions by confering both attractive and repulsive properties that are highly regulated by ST8SIA2 and ST8SIA4. Polysialylation is formed on a-2,3-linked sialic acid of core glycans.

It is found in the cell membrane. In terms of biological role, this protein is a cell adhesion molecule involved in neuron-neuron adhesion, neurite fasciculation, outgrowth of neurites, etc. The sequence is that of Neural cell adhesion molecule 1 from Rattus norvegicus (Rat).